The primary structure comprises 456 residues: MLNSAMSVVILAAGKGTRMYSDLPKVLHTLAGKAMVQHVIDAANELGASQVHLVYGHGGDLLKNTLKNDNLNWVLQAEQLGTGHAMQQAAPFFSDDEDILMLYGDVPLISVETLQRLRDAKPQGGIGLLTVKLDDPSGYGRITRENGKVTGIVEHKDATDEQRQIQEINTGILIANGADMKRWLAKLTNNNAQGEYYITDIIALAYQEGREIAAVHPDRLSEVEGVNNRLQLSRLERVYQSEQAEKLLLAGVMLRDPARFDLRGALTHGRDVEIDTNVIIKGNVTLGHRVKIGAGCVIKNSVIGDDCDISPYSVVEDAHLEAACTIGPFARLRPGAELREGAHVGNFVEMKKARLGKGSKAGHLSYLGDAEIGDNVNIGAGTITCNYDGANKFKTIIGDDVFVGSDTQLVAPVTVGKGATIAAGTTVTRDVADNELVLSRVPQVHKQGWQRPAKKK.

The pyrophosphorylase stretch occupies residues 1–229 (MLNSAMSVVI…LSEVEGVNNR (229 aa)). UDP-N-acetyl-alpha-D-glucosamine-binding positions include 11–14 (LAAG), Lys25, Gln76, 81–82 (GT), 103–105 (YGD), Gly140, Glu154, Asn169, and Asn227. Asp105 serves as a coordination point for Mg(2+). Residue Asn227 coordinates Mg(2+). The tract at residues 230–250 (LQLSRLERVYQSEQAEKLLLA) is linker. Residues 251-456 (GVMLRDPARF…QGWQRPAKKK (206 aa)) are N-acetyltransferase. Positions 333 and 351 each coordinate UDP-N-acetyl-alpha-D-glucosamine. The Proton acceptor role is filled by His363. Tyr366 and Asn377 together coordinate UDP-N-acetyl-alpha-D-glucosamine. Acetyl-CoA is bound by residues Ala380, 386-387 (NY), Ser405, Ala423, and Arg440.

This sequence in the N-terminal section; belongs to the N-acetylglucosamine-1-phosphate uridyltransferase family. It in the C-terminal section; belongs to the transferase hexapeptide repeat family. As to quaternary structure, homotrimer. Mg(2+) is required as a cofactor.

The protein localises to the cytoplasm. The catalysed reaction is alpha-D-glucosamine 1-phosphate + acetyl-CoA = N-acetyl-alpha-D-glucosamine 1-phosphate + CoA + H(+). It carries out the reaction N-acetyl-alpha-D-glucosamine 1-phosphate + UTP + H(+) = UDP-N-acetyl-alpha-D-glucosamine + diphosphate. It participates in nucleotide-sugar biosynthesis; UDP-N-acetyl-alpha-D-glucosamine biosynthesis; N-acetyl-alpha-D-glucosamine 1-phosphate from alpha-D-glucosamine 6-phosphate (route II): step 2/2. It functions in the pathway nucleotide-sugar biosynthesis; UDP-N-acetyl-alpha-D-glucosamine biosynthesis; UDP-N-acetyl-alpha-D-glucosamine from N-acetyl-alpha-D-glucosamine 1-phosphate: step 1/1. Its pathway is bacterial outer membrane biogenesis; LPS lipid A biosynthesis. Its function is as follows. Catalyzes the last two sequential reactions in the de novo biosynthetic pathway for UDP-N-acetylglucosamine (UDP-GlcNAc). The C-terminal domain catalyzes the transfer of acetyl group from acetyl coenzyme A to glucosamine-1-phosphate (GlcN-1-P) to produce N-acetylglucosamine-1-phosphate (GlcNAc-1-P), which is converted into UDP-GlcNAc by the transfer of uridine 5-monophosphate (from uridine 5-triphosphate), a reaction catalyzed by the N-terminal domain. The chain is Bifunctional protein GlmU from Citrobacter koseri (strain ATCC BAA-895 / CDC 4225-83 / SGSC4696).